Consider the following 510-residue polypeptide: MRILIIIILIIIVFLVKDTIKKNKKVNSKSPCGPFAFPILGNIIQYFFYQILNIKEHSMIERYSRKYDGITRIWFGDIFILYVSNYEIVKCFQKEENFFDRPSTFVPTWRYMSSNGGGIMSSNDEKWKRAKTTFLKSLKIHGKKYLIEKKSIEFVNSIEKFSNSNQVFYPKQYSQGFTSSIFFKYMFNEDISIDNKFLKEIGTAVGMVFTKNSHLTVFDCFGILSPFYDLFFKFRLRPIEILKKTIDKQLTNHLNSMDSKMGDHQSRDIMDDLLIEYGSLNEISNQDRIQINQICFDVMSTDIGTVATTIDWVLLQLCNRQDLQEIICNEIQDTIKIKRNNVINDGGGGADTDNLFINLCDKQSIPYLIAFIKETMRVFSNGWSLPKTSKHDQICANYFIPKGSILFINYFSIHLNEEFFKNPREFNPARYLDDSIPIPDLHFGIGQRGCPGRFVAMDQVFLCIANTLLKYKIKSIDGKKIDDTIQFSVYLKPKDFGILLEKRNKLFVND.

The chain crosses the membrane as a helical span at residues 1 to 21 (MRILIIIILIIIVFLVKDTIK). C450 is a binding site for heme.

The protein belongs to the cytochrome P450 family. Heme is required as a cofactor.

The protein resides in the membrane. The polypeptide is Probable cytochrome P450 517A2 (cyp517A2) (Dictyostelium discoideum (Social amoeba)).